A 361-amino-acid chain; its full sequence is MSDVERTEFKLPEGMDLSSPPQRNQDVDAAEQQGEHDIERSLRPKSLDEFIGQPKVREQLSLVLNGAKNRGVTPDHVLLSGPPGLGKTTMAMIIAQELGSSLRMTSGPALERAGDLAAMLSNLMEGDVLFIDEIHRIARPAEEMLYMAMEDFRIDVIVGKGPGATSIPLEIPPFTLVGATTRAGMLTGPLRDRFGFTAQMEYYDTEDLTRVISRAARILEVDIDQDAAVEIGSRSRGTPRIANRLLRRVRDYAEVNGDGHIDVAAAQAALRVFDVDERGLDRLDRAVLGALIKGHGGGPVGVNTLAIAVGEEPSTVEEVCEPYLVRAGMISRTGRGRVATAAAWQHLGLEAPEGAIGGTLF.

Composition is skewed to basic and acidic residues over residues 1–13 and 33–43; these read MSDV…KLPE and QGEHDIERSLR. The disordered stretch occupies residues 1-43; the sequence is MSDVERTEFKLPEGMDLSSPPQRNQDVDAAEQQGEHDIERSLR. The segment at 2–203 is large ATPase domain (RuvB-L); it reads SDVERTEFKL…FGFTAQMEYY (202 aa). ATP contacts are provided by residues leucine 42, arginine 43, glycine 84, lysine 87, threonine 88, threonine 89, 150–152, arginine 193, tyrosine 203, and arginine 240; that span reads EDF. Threonine 88 is a Mg(2+) binding site. A small ATPAse domain (RuvB-S) region spans residues 204 to 274; that stretch reads DTEDLTRVIS…AAQAALRVFD (71 aa). Residues 277–361 are head domain (RuvB-H); sequence ERGLDRLDRA…PEGAIGGTLF (85 aa). 2 residues coordinate DNA: arginine 332 and arginine 337.

The protein belongs to the RuvB family. In terms of assembly, homohexamer. Forms an RuvA(8)-RuvB(12)-Holliday junction (HJ) complex. HJ DNA is sandwiched between 2 RuvA tetramers; dsDNA enters through RuvA and exits via RuvB. An RuvB hexamer assembles on each DNA strand where it exits the tetramer. Each RuvB hexamer is contacted by two RuvA subunits (via domain III) on 2 adjacent RuvB subunits; this complex drives branch migration. In the full resolvosome a probable DNA-RuvA(4)-RuvB(12)-RuvC(2) complex forms which resolves the HJ.

The protein localises to the cytoplasm. It carries out the reaction ATP + H2O = ADP + phosphate + H(+). Its function is as follows. The RuvA-RuvB-RuvC complex processes Holliday junction (HJ) DNA during genetic recombination and DNA repair, while the RuvA-RuvB complex plays an important role in the rescue of blocked DNA replication forks via replication fork reversal (RFR). RuvA specifically binds to HJ cruciform DNA, conferring on it an open structure. The RuvB hexamer acts as an ATP-dependent pump, pulling dsDNA into and through the RuvAB complex. RuvB forms 2 homohexamers on either side of HJ DNA bound by 1 or 2 RuvA tetramers; 4 subunits per hexamer contact DNA at a time. Coordinated motions by a converter formed by DNA-disengaged RuvB subunits stimulates ATP hydrolysis and nucleotide exchange. Immobilization of the converter enables RuvB to convert the ATP-contained energy into a lever motion, pulling 2 nucleotides of DNA out of the RuvA tetramer per ATP hydrolyzed, thus driving DNA branch migration. The RuvB motors rotate together with the DNA substrate, which together with the progressing nucleotide cycle form the mechanistic basis for DNA recombination by continuous HJ branch migration. Branch migration allows RuvC to scan DNA until it finds its consensus sequence, where it cleaves and resolves cruciform DNA. The chain is Holliday junction branch migration complex subunit RuvB from Corynebacterium aurimucosum (strain ATCC 700975 / DSM 44827 / CIP 107346 / CN-1) (Corynebacterium nigricans).